A 490-amino-acid polypeptide reads, in one-letter code: Betaine aldehyde dehydrogenase (490 aa).

K(+)-binding residues include threonine 26, isoleucine 27, and aspartate 93. 150–152 (GAW) serves as a coordination point for NAD(+). Lysine 162 serves as the catalytic Charge relay system. Position 176-179 (176-179 (KPSE)) interacts with NAD(+). Valine 180 lines the K(+) pocket. Residue 230–233 (GVAS) coordinates NAD(+). Position 246 (leucine 246) interacts with K(+). Residue glutamate 252 is the Proton acceptor of the active site. Residues glycine 254, cysteine 286, and glutamate 387 each contribute to the NAD(+) site. Catalysis depends on cysteine 286, which acts as the Nucleophile. Cysteine 286 is subject to Cysteine sulfenic acid (-SOH). Residues lysine 457 and glycine 460 each contribute to the K(+) site. The active-site Charge relay system is the glutamate 464.

The protein belongs to the aldehyde dehydrogenase family. In terms of assembly, dimer of dimers. The cofactor is K(+).

It carries out the reaction betaine aldehyde + NAD(+) + H2O = glycine betaine + NADH + 2 H(+). Its pathway is amine and polyamine biosynthesis; betaine biosynthesis via choline pathway; betaine from betaine aldehyde: step 1/1. Functionally, involved in the biosynthesis of the osmoprotectant glycine betaine. Catalyzes the irreversible oxidation of betaine aldehyde to the corresponding acid. This is Betaine aldehyde dehydrogenase from Escherichia coli O9:H4 (strain HS).